A 597-amino-acid polypeptide reads, in one-letter code: Phosphomethylpyrimidine synthase (597 aa).

Substrate is bound by residues Asn207, Met236, Tyr265, His301, 321-323 (SRG), 362-365 (DGLR), and Glu401. Zn(2+) is bound at residue His405. Tyr428 serves as a coordination point for substrate. A Zn(2+)-binding site is contributed by His469. Positions 549, 552, and 557 each coordinate [4Fe-4S] cluster.

It belongs to the ThiC family. Homodimer. The cofactor is [4Fe-4S] cluster.

The catalysed reaction is 5-amino-1-(5-phospho-beta-D-ribosyl)imidazole + S-adenosyl-L-methionine = 4-amino-2-methyl-5-(phosphooxymethyl)pyrimidine + CO + 5'-deoxyadenosine + formate + L-methionine + 3 H(+). Its pathway is cofactor biosynthesis; thiamine diphosphate biosynthesis. Its function is as follows. Catalyzes the synthesis of the hydroxymethylpyrimidine phosphate (HMP-P) moiety of thiamine from aminoimidazole ribotide (AIR) in a radical S-adenosyl-L-methionine (SAM)-dependent reaction. In Gluconobacter oxydans (strain 621H) (Gluconobacter suboxydans), this protein is Phosphomethylpyrimidine synthase.